Consider the following 464-residue polypeptide: ATP synthase subunit beta 1 (464 aa).

153-160 serves as a coordination point for ATP; sequence GGAGVGKT.

Belongs to the ATPase alpha/beta chains family. As to quaternary structure, F-type ATPases have 2 components, CF(1) - the catalytic core - and CF(0) - the membrane proton channel. CF(1) has five subunits: alpha(3), beta(3), gamma(1), delta(1), epsilon(1). CF(0) has three main subunits: a(1), b(2) and c(9-12). The alpha and beta chains form an alternating ring which encloses part of the gamma chain. CF(1) is attached to CF(0) by a central stalk formed by the gamma and epsilon chains, while a peripheral stalk is formed by the delta and b chains.

It localises to the cell inner membrane. It catalyses the reaction ATP + H2O + 4 H(+)(in) = ADP + phosphate + 5 H(+)(out). Produces ATP from ADP in the presence of a proton gradient across the membrane. The catalytic sites are hosted primarily by the beta subunits. The chain is ATP synthase subunit beta 1 from Burkholderia mallei (strain SAVP1).